The chain runs to 79 residues: Conotoxin TxMEKL-021 (79 aa).

The signal sequence occupies residues 1-19 (MEKLTILLLVAVVLMSTQA). Residues 20 to 47 (LPQGGGEKRPRENIRFLSKRKSNAERWR) constitute a propeptide that is removed on maturation. 3 cysteine pairs are disulfide-bonded: C51/C65, C58/C69, and C64/C75.

Belongs to the conotoxin O2 superfamily. In terms of tissue distribution, expressed by the venom duct.

The protein localises to the secreted. The protein is Conotoxin TxMEKL-021 of Conus textile (Cloth-of-gold cone).